The chain runs to 389 residues: Gustatory receptor 68a (389 aa).

Over 1 to 42 the chain is Cytoplasmic; sequence MKIYQDIYPISKPSQIFAILPFYSGDVDDGFRFGGLGRWYGR. The chain crosses the membrane as a helical span at residues 43 to 63; that stretch reads LVALIILIGSLTLGEDVLFAS. Topologically, residues 64-82 are extracellular; sequence KEYRLVASAQGDTEEINRT. N-linked (GlcNAc...) asparagine glycosylation occurs at asparagine 80. The helical transmembrane segment at 83 to 103 threads the bilayer; that stretch reads IETLLCIISYTMVVLSSVQNA. The Cytoplasmic portion of the chain corresponds to 104-133; sequence SRHFRTLHDIAKIDEYLLANGFRETYSCRN. The chain crosses the membrane as a helical span at residues 134–154; sequence LTILVTSAAGGVLAVAFYYIH. The Extracellular portion of the chain corresponds to 155–164; sequence YRSGIGAKRQ. The chain crosses the membrane as a helical span at residues 165–185; that stretch reads IILLLIYFLQLLYSTLLALYL. Residues 186–236 lie on the Cytoplasmic side of the membrane; it reads RTLMMNLAQRIGFLNQKLDTFNLQDCGHMENWRELSNLIEVLCKFRYITEN. The helical transmembrane segment at 237-257 threads the bilayer; that stretch reads INCVAGVSLLFYFGFSFYTVT. The N-linked (GlcNAc...) asparagine glycan is linked to asparagine 258. Over 258-281 the chain is Extracellular; the sequence is NQSYLAFATLTAGSLSSKTEVADT. Residues 282–302 form a helical membrane-spanning segment; sequence IGLSCIWVLAETITMIVICSA. At 303-352 the chain is on the cytoplasmic side; the sequence is CDGLASEVNGTAQILARIYGKSKQFQNLIDKFLTKSIKQDLQFTAYGFFS. The helical transmembrane segment at 353-373 threads the bilayer; the sequence is IDNSTLFKIFSAVTTYLVILI. At 374–389 the chain is on the extracellular side; sequence QFKQLEDSKVEDISQA.

This sequence belongs to the insect chemoreceptor superfamily. Gustatory receptor (GR) family. Gr21a subfamily. As to expression, expressed in chemosensory neurons of about 20 male-specific gustatory bristles in the forelegs. No expression is seen in the mechanosensory neurons. In larvae, expressed in the ventral pharyngeal sense organ.

The protein localises to the cell membrane. Dsx-dependent essential component of pheromone-driven courtship behavior. Recognizes a female pheromone involved in the second step (tapping step) of the courtship display which is essential for efficient execution of the entire courtship sequence and timely mating. Required for detection of the male sex pheromone CH503 which is transferred from males to females during mating and inhibits courtship behavior by other males. Gr68a-expressing neurons in the male foreleg relay signals to the suboesophageal zone (SEZ) and courtship suppression is mediated by the release of the neuropeptide tachykinin from a cluster of 8-10 neurons in the SEZ. The chain is Gustatory receptor 68a (Gr68a) from Drosophila melanogaster (Fruit fly).